The sequence spans 478 residues: Methionine aminopeptidase 2 (478 aa).

Residues 1–122 (MAGVEQAASF…TDPPSVPICD (122 aa)) form a disordered region. Ala2 carries the post-translational modification N-acetylalanine. Over residues 36 to 46 (KKKRRKKKKGK) the composition is skewed to basic residues. Position 60 is a phosphoserine; alternate (Ser60). A glycan (O-linked (GlcNAc) serine; alternate) is linked at Ser60. A compositionally biased stretch (acidic residues) spans 80–92 (ERDDDDEDGDGDA). Positions 97–109 (GKKKKKKKKKRGP) are enriched in basic residues. His231 serves as a coordination point for substrate. A divalent metal cation contacts are provided by Asp251, Asp262, and His331. His339 lines the substrate pocket. A divalent metal cation-binding residues include Glu364 and Glu459.

This sequence belongs to the peptidase M24A family. Methionine aminopeptidase eukaryotic type 2 subfamily. In terms of assembly, binds EIF2S1 at low magnesium concentrations. Interacts strongly with the eIF-2 gamma-subunit EIF2S3. Requires Co(2+) as cofactor. Zn(2+) is required as a cofactor. Mn(2+) serves as cofactor. The cofactor is Fe(2+). Post-translationally, contains approximately 12 O-linked N-acetylglucosamine (GlcNAc) residues. O-glycosylation is required for EIF2S1 binding.

Its subcellular location is the cytoplasm. It carries out the reaction Release of N-terminal amino acids, preferentially methionine, from peptides and arylamides.. Its function is as follows. Cotranslationally removes the N-terminal methionine from nascent proteins. The N-terminal methionine is often cleaved when the second residue in the primary sequence is small and uncharged (Met-Ala-, Cys, Gly, Pro, Ser, Thr, or Val). Functionally, protects eukaryotic initiation factor EIF2S1 from translation-inhibiting phosphorylation by inhibitory kinases such as EIF2AK2/PKR and EIF2AK1/HCR. Plays a critical role in the regulation of protein synthesis. This chain is Methionine aminopeptidase 2 (Metap2), found in Mus musculus (Mouse).